A 263-amino-acid chain; its full sequence is MRDQAPLIHPTAVIDPAARLASDVRVGAFSLIGADVEIGAGTEVGPHCSIHGPTRIGSNNRFIGHAAIGGEPQDKKYAGERTELVIGNGNVIREFVTINRGTGGGGGITVVGDDNWMLAYTHVAHDCHVGNHCVFSNNTTLAGHVTVGDYVIISGFAGAHQFCRIGAHAFLGMGALTNGDVPPFTMVGSDSLGRPRGINSEGLKRRGFDAERISAIKRAYRTLYVAGLPLAEAKLQLAEQARDSDDVRGLLEFIEAAERPLLR.

Belongs to the transferase hexapeptide repeat family. LpxA subfamily. In terms of assembly, homotrimer.

The protein localises to the cytoplasm. The enzyme catalyses a (3R)-hydroxyacyl-[ACP] + UDP-N-acetyl-alpha-D-glucosamine = a UDP-3-O-[(3R)-3-hydroxyacyl]-N-acetyl-alpha-D-glucosamine + holo-[ACP]. The protein operates within glycolipid biosynthesis; lipid IV(A) biosynthesis; lipid IV(A) from (3R)-3-hydroxytetradecanoyl-[acyl-carrier-protein] and UDP-N-acetyl-alpha-D-glucosamine: step 1/6. In terms of biological role, involved in the biosynthesis of lipid A, a phosphorylated glycolipid that anchors the lipopolysaccharide to the outer membrane of the cell. This Xanthomonas campestris pv. campestris (strain 8004) protein is Acyl-[acyl-carrier-protein]--UDP-N-acetylglucosamine O-acyltransferase.